The chain runs to 337 residues: Dihydroorotate dehydrogenase (quinone) (337 aa).

Residues 61-65 (AGLDK) and threonine 85 contribute to the FMN site. Lysine 65 is a substrate binding site. 110–114 (NRMGF) lines the substrate pocket. Asparagine 138 and asparagine 171 together coordinate FMN. Asparagine 171 contacts substrate. Serine 174 serves as the catalytic Nucleophile. Position 176 (asparagine 176) interacts with substrate. The FMN site is built by lysine 216 and threonine 244. 245–246 (NT) contacts substrate. FMN contacts are provided by residues glycine 267, glycine 296, and 317 to 318 (YS).

Belongs to the dihydroorotate dehydrogenase family. Type 2 subfamily. As to quaternary structure, monomer. FMN serves as cofactor.

Its subcellular location is the cell membrane. It carries out the reaction (S)-dihydroorotate + a quinone = orotate + a quinol. Its pathway is pyrimidine metabolism; UMP biosynthesis via de novo pathway; orotate from (S)-dihydroorotate (quinone route): step 1/1. Its function is as follows. Catalyzes the conversion of dihydroorotate to orotate with quinone as electron acceptor. The chain is Dihydroorotate dehydrogenase (quinone) from Thiobacillus denitrificans (strain ATCC 25259 / T1).